We begin with the raw amino-acid sequence, 60 residues long: Large ribosomal subunit protein bL32 (60 aa).

The protein belongs to the bacterial ribosomal protein bL32 family.

In Borreliella burgdorferi (strain ATCC 35210 / DSM 4680 / CIP 102532 / B31) (Borrelia burgdorferi), this protein is Large ribosomal subunit protein bL32 (rpmF).